A 335-amino-acid polypeptide reads, in one-letter code: Syntaxin-18 (335 aa).

The Cytoplasmic segment spans residues M1–N309. 2 stretches are compositionally biased toward basic and acidic residues: residues K168–S182 and K192–L208. Residues K168–E226 are disordered. The t-SNARE coiled-coil homology domain maps to I243 to A305. A helical; Anchor for type IV membrane protein membrane pass occupies residues A310 to L330. Topologically, residues D331 to S335 are vesicular.

It belongs to the syntaxin family. As to quaternary structure, component of a SNARE complex consisting of STX18, USE1L, BNIP1/SEC20L, and SEC22B. RINT1/TIP20L and ZW10 are associated with the complex through interaction with BNIP1/SEC20L. Interacts directly with USE1L and BNIP1/SEC20L. In terms of tissue distribution, ubiquitous.

The protein resides in the endoplasmic reticulum membrane. Its subcellular location is the golgi apparatus membrane. In terms of biological role, syntaxin that may be involved in targeting and fusion of Golgi-derived retrograde transport vesicles with the ER. The chain is Syntaxin-18 (STX18) from Homo sapiens (Human).